Reading from the N-terminus, the 296-residue chain is Decaprenyl diphosphate synthase (296 aa).

A disordered region spans residues 1–58; sequence MVRNERTLKSTDFPQLPPAPDDYPTFPDKSTWPVVFPMLPPSPDGGPRRPPQHTSKAV. The active site involves Asp76. A Mg(2+)-binding site is contributed by Asp76. Substrate is bound by residues 77–80, Trp81, Arg89, His93, and 121–123; these read GNGR and STE. Asn124 functions as the Proton acceptor in the catalytic mechanism. Residues Trp125, Arg127, Arg244, and 250–252 contribute to the substrate site; that span reads RSS. Residue Glu263 participates in Mg(2+) binding.

The protein belongs to the UPP synthase family. In terms of assembly, homodimer. Requires Mg(2+) as cofactor.

It is found in the cell membrane. It carries out the reaction (2Z,6E)-farnesyl diphosphate + 7 isopentenyl diphosphate = (2Z,6Z,10Z,14Z,18Z,22Z,26Z,30Z,34E)-decaprenyl diphosphate + 7 diphosphate. It catalyses the reaction n isopentenyl diphosphate + (2E,6E)-farnesyl diphosphate = a di-trans,poly-cis-polyprenyl diphosphate + n diphosphate. In terms of biological role, catalyzes the sequential condensation of isopentenyl diphosphate (IPP) in the cis configuration with (2Z,6E)-farnesyl diphosphate (Z-FPP or EZ-FPP) generating the 50 carbon product trans,polycis-decaprenyl diphosphate. When (2E,6E)-farnesyl diphosphate (E-FPP or EE-FPP) is used in vitro, both primary products decaprenyl diphosphate and (2E,6E,10E)-geranylgeranyl diphosphate (EEE-GGPP) are synthesized. M.tuberculosis does not synthesize (2E,6E,10Z)-geranylgeranyl diphosphate (EEZ-GGPP) and heptaprenyl diphosphate. Can also accept many different allylic substrates, including E-geranyl diphosphate (E-GPP), neryl diphosphate (NPP), and all-trans-geranyl-geranyl diphosphate. This is Decaprenyl diphosphate synthase (uppS) from Mycobacterium leprae (strain TN).